A 503-amino-acid chain; its full sequence is Maturase K (503 aa).

The protein belongs to the intron maturase 2 family. MatK subfamily.

It localises to the plastid. The protein localises to the chloroplast. In terms of biological role, usually encoded in the trnK tRNA gene intron. Probably assists in splicing its own and other chloroplast group II introns. The polypeptide is Maturase K (Liquidambar formosana (Formosan gum)).